Consider the following 189-residue polypeptide: Apolipoprotein D (189 aa).

An N-terminal signal peptide occupies residues Met-1–Gly-20. Pyrrolidone carboxylic acid is present on Gln-21. 2 disulfide bridges follow: Cys-28–Cys-134 and Cys-61–Cys-185. Residues Asn-65 and Asn-98 are each glycosylated (N-linked (GlcNAc...) (complex) asparagine).

Belongs to the calycin superfamily. Lipocalin family. As to quaternary structure, homodimer. In plasma, also exists as a disulfide-linked heterodimer with APOA2. In terms of processing, N-glycosylated. N-glycan heterogeneity at Asn-65: Hex5HexNAc4 (major) and Hex6HexNAc5 (minor); at Asn-98: Hex5HexNAc4 (minor), dHex1Hex5HexNAc4 (major), dHex1Hex6HexNAc5 (minor) and dHex1Hex7HexNAc6 (minor). In terms of tissue distribution, expressed in liver, intestine, pancreas, kidney, placenta, adrenal, spleen, fetal brain tissue and tears.

It is found in the secreted. Functionally, APOD occurs in the macromolecular complex with lecithin-cholesterol acyltransferase. It is probably involved in the transport and binding of bilin. Appears to be able to transport a variety of ligands in a number of different contexts. In Homo sapiens (Human), this protein is Apolipoprotein D (APOD).